Reading from the N-terminus, the 104-residue chain is L-rhamnose mutarotase (104 aa).

Tyr-18 contacts substrate. His-22 acts as the Proton donor in catalysis. Substrate is bound by residues Tyr-41 and 76–77 (WW).

It belongs to the rhamnose mutarotase family. In terms of assembly, homodimer.

Its subcellular location is the cytoplasm. It carries out the reaction alpha-L-rhamnose = beta-L-rhamnose. It functions in the pathway carbohydrate metabolism; L-rhamnose metabolism. Its function is as follows. Involved in the anomeric conversion of L-rhamnose. The chain is L-rhamnose mutarotase from Yersinia pseudotuberculosis serotype O:1b (strain IP 31758).